Reading from the N-terminus, the 74-residue chain is MEIKYLLTVFLVLLIVSDHCQAFLSSLIPSAISGLISAFKGRRKRDLNGQIDHFKNFRKRDAELEELLSKLPIY.

The signal sequence occupies residues 1–22 (MEIKYLLTVFLVLLIVSDHCQA). Lysine amide is present on Lys-40. Residues 46–74 (DLNGQIDHFKNFRKRDAELEELLSKLPIY) constitute a propeptide that is removed on maturation.

Belongs to the non-disulfide-bridged peptide (NDBP) superfamily. Short antimicrobial peptide (group 4) family.

Its subcellular location is the secreted. It localises to the target cell membrane. Antibacterial peptide. This peptide gene is up-regulated at the transcriptional level after the venom gland is challenged by Gram-positive bacteria. The polypeptide is Peptide BmKb2 (Olivierus martensii (Manchurian scorpion)).